The primary structure comprises 349 residues: DNA polymerase IV (349 aa).

In terms of domain architecture, UmuC spans 7-188 (IIHIDMDYFF…LPVKKLFGVG (182 aa)). Residues Asp-11 and Asp-106 each coordinate Mg(2+). The active site involves Glu-107.

The protein belongs to the DNA polymerase type-Y family. In terms of assembly, monomer. Requires Mg(2+) as cofactor.

The protein localises to the cytoplasm. It carries out the reaction DNA(n) + a 2'-deoxyribonucleoside 5'-triphosphate = DNA(n+1) + diphosphate. In terms of biological role, poorly processive, error-prone DNA polymerase involved in untargeted mutagenesis. Copies undamaged DNA at stalled replication forks, which arise in vivo from mismatched or misaligned primer ends. These misaligned primers can be extended by PolIV. Exhibits no 3'-5' exonuclease (proofreading) activity. May be involved in translesional synthesis, in conjunction with the beta clamp from PolIII. This chain is DNA polymerase IV, found in Francisella tularensis subsp. holarctica (strain OSU18).